The following is a 434-amino-acid chain: Perilipin-3 (434 aa).

The tract at residues 1–22 (MSADGAEADGSTQVTVEEPVQQ) is disordered. Serine 2 carries the post-translational modification N-acetylserine. Residue serine 31 is modified to Phosphoserine. Lysine 65 carries the N6-acetyllysine modification. The residue at position 91 (serine 91) is a Phosphoserine. Lysine 122 is covalently cross-linked (Glycyl lysine isopeptide (Lys-Gly) (interchain with G-Cter in SUMO1)). Phosphoserine is present on residues serine 130 and serine 148. Position 170 is a phosphothreonine (threonine 170). Phosphoserine is present on residues serine 175 and serine 179. Position 216 is a phosphothreonine (threonine 216). Residues serine 217 and serine 241 each carry the phosphoserine modification. The residue at position 251 (tyrosine 251) is a Phosphotyrosine. 2 coiled-coil regions span residues 252 to 277 (EHSLGKLRATKQRAQEALLQLSQVLS) and 353 to 377 (TNVKDQVQQARRQVEDLQATFSSIH).

It belongs to the perilipin family. In terms of assembly, homooligomer. Interacts with M6PR (via the cytoplasmic domain). Interacts with IGF2R (via the cytoplasmic domain). May exist as a homodimer. Post-translationally, phosphorylation at Tyr-251 by isoform 1 of CHKA (CHKalpha2) promotes dissociation from lipid droplets: dissociation is followed by recruitment of autophagosome machinery to lipid droplets and subsequent lipid droplet lipolysis.

It is found in the lipid droplet. The protein localises to the endosome membrane. It localises to the cytoplasm. Functionally, structural component of lipid droplets, which is required for the formation and maintenance of lipid storage droplets. Required for the transport of mannose 6-phosphate receptors (MPR) from endosomes to the trans-Golgi network. The protein is Perilipin-3 (PLIN3) of Homo sapiens (Human).